The primary structure comprises 260 residues: 5'-nucleotidase SurE (260 aa).

D8, D9, S43, and N96 together coordinate a divalent metal cation.

The protein belongs to the SurE nucleotidase family. A divalent metal cation serves as cofactor.

Its subcellular location is the cytoplasm. It carries out the reaction a ribonucleoside 5'-phosphate + H2O = a ribonucleoside + phosphate. Nucleotidase that shows phosphatase activity on nucleoside 5'-monophosphates. The polypeptide is 5'-nucleotidase SurE (Ruegeria pomeroyi (strain ATCC 700808 / DSM 15171 / DSS-3) (Silicibacter pomeroyi)).